The primary structure comprises 211 residues: Large ribosomal subunit protein uL4 (211 aa).

The tract at residues 42–73 (NNRQGTHSTKDRSEVRGGGIKPWAQKGTGRAR) is disordered.

It belongs to the universal ribosomal protein uL4 family. In terms of assembly, part of the 50S ribosomal subunit.

Its function is as follows. One of the primary rRNA binding proteins, this protein initially binds near the 5'-end of the 23S rRNA. It is important during the early stages of 50S assembly. It makes multiple contacts with different domains of the 23S rRNA in the assembled 50S subunit and ribosome. Functionally, forms part of the polypeptide exit tunnel. This is Large ribosomal subunit protein uL4 from Leptospira biflexa serovar Patoc (strain Patoc 1 / Ames).